The primary structure comprises 541 residues: Protein panoramix (541 aa).

Residues 1–169 are interaction with Piwi; it reads MEAPMKLEVK…TLVPDEQQSF (169 aa). Disordered regions lie at residues 52–75 and 198–281; these read SDPE…LQPS and TAEN…TELD. The stretch at 194-216 forms a coiled coil; sequence MLEMTAENRKVKHKKKKHKKERS. The span at 203–220 shows a compositional bias: basic residues; that stretch reads KVKHKKKKHKKERSHRSN. 2 stretches are compositionally biased toward basic and acidic residues: residues 241 to 251 and 269 to 279; these read DDKNQFDCDYR and SSKERKLRDTE. A nxf2-interacting region (NIR) region spans residues 315–343; sequence LSKADKRSLAVARAELVLEQIQQKANKEE. The stretch at 323–343 forms a coiled coil; it reads LAVARAELVLEQIQQKANKEE. Residues 387-446 form a necessary for interaction with nxf2 and protein stability region; the sequence is TPGTRIDLSKWGLETVPEATKRLLRLLGIDVARLKELQSTVKPSQRILKLKKEQLEQGLA.

In the ovaries, part of a complex composed of at least Panx, nxf2, piwi and Nxt1. The complex is knowns as Panx-induced cotranscriptional silencing (PICTS) complex, Panx-nxf2-dependent TAP/p15 silencing (Pandas complex), SFiNX (silencing factor interacting nuclear export variant) or piwi-Panx-nxf2-p15 (PPNP) complex. Interacts (via NIR region) with nxf2 (via TAP-C domain); the interaction is direct. Expressed in female gonads (at protein level).

The protein resides in the nucleus. In terms of biological role, acts via the piwi-interacting RNA (piRNA) pathway which mediates the repression of transposable elements during meiosis by forming complexes composed of piRNAs and piwi proteins and governs the methylation and subsequent repression of transposons. Required for transcriptional silencing of transposons targeted by piwi and confers its effects by interacting with nascent RNA transcripts. Likely to be recruited to nascent transcripts cotranscriptionally by piwi and to recruit additional factors involved in transcriptional silencing. In the ovaries, forms a complex with nxf2, piwi and Nxt1 which acts as effectors of cotranscriptional transposon silencing. The interaction with nxf2 stabilizes the nuclear protein complex. The polypeptide is Protein panoramix (Drosophila melanogaster (Fruit fly)).